The sequence spans 356 residues: Phosphate acyltransferase (356 aa).

The protein belongs to the PlsX family. As to quaternary structure, homodimer. Probably interacts with PlsY.

Its subcellular location is the cytoplasm. The enzyme catalyses a fatty acyl-[ACP] + phosphate = an acyl phosphate + holo-[ACP]. Its pathway is lipid metabolism; phospholipid metabolism. Its function is as follows. Catalyzes the reversible formation of acyl-phosphate (acyl-PO(4)) from acyl-[acyl-carrier-protein] (acyl-ACP). This enzyme utilizes acyl-ACP as fatty acyl donor, but not acyl-CoA. This Shigella sonnei (strain Ss046) protein is Phosphate acyltransferase.